The chain runs to 397 residues: MRIGVVGLGKAFMLMLPTFLMDRRVQLVAASDTDPLSLRQFKADFPAAAVHGDIESLCKNPDVEVVYIGTPHQFHAVHAEIALNAGKHVLVEKPMAVTLEDCCRMNACAQRAGKYLIVGHSHSFDHPISRAKELIDSGRYGRVRFIHSMNYTDFLYRPRRAEELNTDLGGGVVFNQASHQLDVIRLLAQGRVVDVSSYLGRWDAARRTEGAYSALIKFDNGVAANVTYSGYAHYNSDEVMGWVNELGEKQPERRLFPTRLRLDEVLNKGSEAAYKNEMSYGRGWSAHGLPKMARNHQHFGHLVISCEGADIVPKAEKIEVFANGEYHCENFSMPDFPRQEVMDELFDAISGTRPPVHTGEWAMETLDLCIALLEGGKPELIGMRATAVACAGRSSGR.

To P.putida PHT4.

The sequence is that of 1-carboxy-3-chloro-3,4-dihydroxycyclo hexa-1,5-diene dehydrogenase (cbaC) from Comamonas testosteroni (Pseudomonas testosteroni).